We begin with the raw amino-acid sequence, 61 residues long: Large ribosomal subunit protein uL30 (61 aa).

Belongs to the universal ribosomal protein uL30 family. Part of the 50S ribosomal subunit.

The chain is Large ribosomal subunit protein uL30 from Neisseria meningitidis serogroup C (strain 053442).